The primary structure comprises 206 residues: Small ribosomal subunit protein uS4A (206 aa).

Residues 96–156 form the S4 RNA-binding domain; that stretch reads GRLDNVVYRM…EKAKKQSRIG (61 aa).

The protein belongs to the universal ribosomal protein uS4 family. In terms of assembly, part of the 30S ribosomal subunit. Contacts protein S5. The interaction surface between S4 and S5 is involved in control of translational fidelity.

In terms of biological role, one of the primary rRNA binding proteins, it binds directly to 16S rRNA where it nucleates assembly of the body of the 30S subunit. With S5 and S12 plays an important role in translational accuracy. The protein is Small ribosomal subunit protein uS4A of Psychromonas ingrahamii (strain DSM 17664 / CCUG 51855 / 37).